The sequence spans 271 residues: 4-hydroxy-tetrahydrodipicolinate reductase (271 aa).

NAD(+) contacts are provided by residues 10–15 (GAGGRM), E36, 100–102 (GTT), and 124–127 (SGNM). The active-site Proton donor/acceptor is H157. H158 is a binding site for (S)-2,3,4,5-tetrahydrodipicolinate. Residue K161 is the Proton donor of the active site. Residue 167 to 168 (GT) coordinates (S)-2,3,4,5-tetrahydrodipicolinate.

It belongs to the DapB family.

The protein resides in the cytoplasm. The catalysed reaction is (S)-2,3,4,5-tetrahydrodipicolinate + NAD(+) + H2O = (2S,4S)-4-hydroxy-2,3,4,5-tetrahydrodipicolinate + NADH + H(+). It catalyses the reaction (S)-2,3,4,5-tetrahydrodipicolinate + NADP(+) + H2O = (2S,4S)-4-hydroxy-2,3,4,5-tetrahydrodipicolinate + NADPH + H(+). The protein operates within amino-acid biosynthesis; L-lysine biosynthesis via DAP pathway; (S)-tetrahydrodipicolinate from L-aspartate: step 4/4. Its function is as follows. Catalyzes the conversion of 4-hydroxy-tetrahydrodipicolinate (HTPA) to tetrahydrodipicolinate. The protein is 4-hydroxy-tetrahydrodipicolinate reductase of Rhodopseudomonas palustris (strain HaA2).